The chain runs to 104 residues: Large ribosomal subunit protein uL24 (104 aa).

Belongs to the universal ribosomal protein uL24 family. Part of the 50S ribosomal subunit.

Its function is as follows. One of two assembly initiator proteins, it binds directly to the 5'-end of the 23S rRNA, where it nucleates assembly of the 50S subunit. In terms of biological role, one of the proteins that surrounds the polypeptide exit tunnel on the outside of the subunit. The sequence is that of Large ribosomal subunit protein uL24 from Afipia carboxidovorans (strain ATCC 49405 / DSM 1227 / KCTC 32145 / OM5) (Oligotropha carboxidovorans).